The sequence spans 256 residues: MATSLRITGLVKEYRAGKPVLNGIDLDIAGQGLTAIIGPSGTGKSTLLRCINRLIEPTSGEIVLKDAEGTVDLARVRGQSLRRARRRIGMVFQEYNLVERLTVMENLLTGRLGYTSALNAWMRRFDPADIERAFQLLDTVGLAGFADQRADALSGGQRQRVGIARALMQRPQLLLADEPTSSLDPKTSVEIMKLLTEQGSVNGIPVLVNIHDVELARRYANRIVGMSGGHVVYDGDGKGLDATMLKTIYGGESWLE.

Residues 5–253 enclose the ABC transporter domain; the sequence is LRITGLVKEY…MLKTIYGGES (249 aa). 38–45 is an ATP binding site; sequence GPSGTGKS.

Belongs to the ABC transporter superfamily. Phosphonates importer (TC 3.A.1.9.1) family. As to quaternary structure, the complex is composed of two ATP-binding proteins (PhnC), two transmembrane proteins (PhnE) and a solute-binding protein (PhnD).

It localises to the cell inner membrane. It carries out the reaction phosphonate(out) + ATP + H2O = phosphonate(in) + ADP + phosphate + H(+). Part of the ABC transporter complex PhnCDE involved in phosphonates import. Responsible for energy coupling to the transport system. The sequence is that of Phosphonates import ATP-binding protein PhnC from Bordetella parapertussis (strain 12822 / ATCC BAA-587 / NCTC 13253).